Consider the following 314-residue polypeptide: Glutathione synthetase (314 aa).

One can recognise an ATP-grasp domain in the interval 125 to 311 (EKLAAQLFPQ…IAGQLFDAIE (187 aa)). 151 to 208 (FVQKQEQAILKPLDGMGGHSIFRSSNGDPNLNVILETLTDGGRTLAIAQRYLQQIIEG) is an ATP binding site. Glu282 and Asn284 together coordinate Mg(2+).

The protein belongs to the prokaryotic GSH synthase family. Mg(2+) serves as cofactor. It depends on Mn(2+) as a cofactor.

The enzyme catalyses gamma-L-glutamyl-L-cysteine + glycine + ATP = glutathione + ADP + phosphate + H(+). Its pathway is sulfur metabolism; glutathione biosynthesis; glutathione from L-cysteine and L-glutamate: step 2/2. This chain is Glutathione synthetase, found in Xylella fastidiosa (strain 9a5c).